We begin with the raw amino-acid sequence, 140 residues long: Large ribosomal subunit protein bL34m (140 aa).

It belongs to the bacterial ribosomal protein bL34 family. Component of the mitochondrial large ribosomal subunit (mt-LSU). Mature N.crassa 74S mitochondrial ribosomes consist of a small (37S) and a large (54S) subunit. The 37S small subunit contains a 16S ribosomal RNA (16S mt-rRNA) and 32 different proteins. The 54S large subunit contains a 23S rRNA (23S mt-rRNA) and 42 different proteins.

It localises to the mitochondrion. Component of the mitochondrial ribosome (mitoribosome), a dedicated translation machinery responsible for the synthesis of mitochondrial genome-encoded proteins, including at least some of the essential transmembrane subunits of the mitochondrial respiratory chain. The mitoribosomes are attached to the mitochondrial inner membrane and translation products are cotranslationally integrated into the membrane. This chain is Large ribosomal subunit protein bL34m (mrpl34), found in Neurospora crassa (strain ATCC 24698 / 74-OR23-1A / CBS 708.71 / DSM 1257 / FGSC 987).